Consider the following 188-residue polypeptide: tRNA(Phe) 7-((3-amino-3-carboxypropyl)-4-demethylwyosine(37)-N(4))-methyltransferase (188 aa).

The protein belongs to the TYW3 family.

The catalysed reaction is 4-demethyl-7-[(3S)-3-amino-3-carboxypropyl]wyosine(37) in tRNA(Phe) + S-adenosyl-L-methionine = 7-[(3S)-3-amino-3-carboxypropyl]wyosine(37) in tRNA(Phe) + S-adenosyl-L-homocysteine + H(+). Functionally, S-adenosyl-L-methionine-dependent methyltransferase that acts as a component of the wyosine derivatives biosynthesis pathway. Probably methylates N-4 position of wybutosine-86 to produce wybutosine-72. The protein is tRNA(Phe) 7-((3-amino-3-carboxypropyl)-4-demethylwyosine(37)-N(4))-methyltransferase of Aeropyrum pernix (strain ATCC 700893 / DSM 11879 / JCM 9820 / NBRC 100138 / K1).